Consider the following 130-residue polypeptide: Small ribosomal subunit protein uS8 (130 aa).

Belongs to the universal ribosomal protein uS8 family.

The protein resides in the cytoplasm. The polypeptide is Small ribosomal subunit protein uS8 (RPS15A) (Brassica napus (Rape)).